The following is a 166-amino-acid chain: Putative 4-hydroxy-4-methyl-2-oxoglutarate aldolase 2 (166 aa).

N-acetylalanine is present on A2. Substrate is bound by residues 81-84 (GGNP) and R103. D104 contacts a divalent metal cation.

Belongs to the class II aldolase/RraA-like family. In terms of assembly, homotrimer. The cofactor is a divalent metal cation.

It carries out the reaction 4-hydroxy-4-methyl-2-oxoglutarate = 2 pyruvate. The catalysed reaction is oxaloacetate + H(+) = pyruvate + CO2. Functionally, catalyzes the aldol cleavage of 4-hydroxy-4-methyl-2-oxoglutarate (HMG) into 2 molecules of pyruvate. Also contains a secondary oxaloacetate (OAA) decarboxylase activity due to the common pyruvate enolate transition state formed following C-C bond cleavage in the retro-aldol and decarboxylation reactions. In Arabidopsis thaliana (Mouse-ear cress), this protein is Putative 4-hydroxy-4-methyl-2-oxoglutarate aldolase 2.